We begin with the raw amino-acid sequence, 240 residues long: Uridylate kinase (240 aa).

12–15 (KLSG) is a binding site for ATP. Position 54 (G54) interacts with UMP. Positions 55 and 59 each coordinate ATP. Residues D74 and 135-142 (TGNPFFTT) contribute to the UMP site. ATP-binding residues include T162, Y168, and D171.

This sequence belongs to the UMP kinase family. Homohexamer.

The protein localises to the cytoplasm. The catalysed reaction is UMP + ATP = UDP + ADP. Its pathway is pyrimidine metabolism; CTP biosynthesis via de novo pathway; UDP from UMP (UMPK route): step 1/1. With respect to regulation, inhibited by UTP. Functionally, catalyzes the reversible phosphorylation of UMP to UDP. The chain is Uridylate kinase from Xanthomonas oryzae pv. oryzae (strain KACC10331 / KXO85).